We begin with the raw amino-acid sequence, 122 residues long: UPF0102 protein Gmet_2864 (122 aa).

This sequence belongs to the UPF0102 family.

The sequence is that of UPF0102 protein Gmet_2864 from Geobacter metallireducens (strain ATCC 53774 / DSM 7210 / GS-15).